Here is a 1088-residue protein sequence, read N- to C-terminus: DNA polymerase II large subunit (1088 aa).

This sequence belongs to the archaeal DNA polymerase II family. In terms of assembly, heterodimer of a large subunit and a small subunit.

The catalysed reaction is DNA(n) + a 2'-deoxyribonucleoside 5'-triphosphate = DNA(n+1) + diphosphate. It catalyses the reaction Exonucleolytic cleavage in the 3'- to 5'-direction to yield nucleoside 5'-phosphates.. Its function is as follows. Possesses two activities: a DNA synthesis (polymerase) and an exonucleolytic activity that degrades single-stranded DNA in the 3'- to 5'-direction. Has a template-primer preference which is characteristic of a replicative DNA polymerase. In Thermoplasma volcanium (strain ATCC 51530 / DSM 4299 / JCM 9571 / NBRC 15438 / GSS1), this protein is DNA polymerase II large subunit (polC).